Consider the following 201-residue polypeptide: Glycerol-3-phosphate acyltransferase (201 aa).

6 helical membrane-spanning segments follow: residues 10–30 (MLIG…GLIL), 60–80 (LAAA…LIAA), 86–106 (AAIA…WIGF), 116–136 (LGVL…AWIV), 139–159 (LLTR…PIAL), and 166–186 (ALAA…RANI).

This sequence belongs to the PlsY family. As to quaternary structure, probably interacts with PlsX.

The protein localises to the cell inner membrane. It catalyses the reaction an acyl phosphate + sn-glycerol 3-phosphate = a 1-acyl-sn-glycero-3-phosphate + phosphate. Its pathway is lipid metabolism; phospholipid metabolism. Functionally, catalyzes the transfer of an acyl group from acyl-phosphate (acyl-PO(4)) to glycerol-3-phosphate (G3P) to form lysophosphatidic acid (LPA). This enzyme utilizes acyl-phosphate as fatty acyl donor, but not acyl-CoA or acyl-ACP. This is Glycerol-3-phosphate acyltransferase from Brucella suis (strain ATCC 23445 / NCTC 10510).